Reading from the N-terminus, the 341-residue chain is Geranylgeranyl pyrophosphate synthase penG (341 aa).

Isopentenyl diphosphate-binding residues include lysine 68, arginine 71, and histidine 100. Mg(2+) is bound by residues aspartate 107 and aspartate 111. Arginine 116 lines the dimethylallyl diphosphate pocket. Arginine 117 is an isopentenyl diphosphate binding site. Residues lysine 194, threonine 195, and glutamine 228 each coordinate dimethylallyl diphosphate. Residue aspartate 231 coordinates Mg(2+). 3 residues coordinate dimethylallyl diphosphate: asparagine 235, lysine 245, and lysine 255.

The protein belongs to the FPP/GGPP synthase family. It depends on Mg(2+) as a cofactor.

It catalyses the reaction isopentenyl diphosphate + dimethylallyl diphosphate = (2E)-geranyl diphosphate + diphosphate. The enzyme catalyses isopentenyl diphosphate + (2E)-geranyl diphosphate = (2E,6E)-farnesyl diphosphate + diphosphate. The catalysed reaction is isopentenyl diphosphate + (2E,6E)-farnesyl diphosphate = (2E,6E,10E)-geranylgeranyl diphosphate + diphosphate. It functions in the pathway secondary metabolite biosynthesis. Its function is as follows. Geranylgeranyl pyrophosphate synthase; part of the gene cluster that mediates the biosynthesis of the indole diterpenes penitrems. The geranylgeranyl diphosphate (GGPP) synthase penG catalyzes the first step in penitrem biosynthesis via conversion of farnesyl pyrophosphate and isopentyl pyrophosphate into geranylgeranyl pyrophosphate (GGPP). Condensation of indole-3-glycerol phosphate with GGPP by the prenyl transferase penC then forms 3-geranylgeranylindole (3-GGI). Epoxidation by the FAD-dependent monooxygenase penM leads to a epoxidized-GGI that is substrate of the terpene cyclase penB for cyclization to yield paspaline. Paspaline is subsequently converted to 13-desoxypaxilline by the cytochrome P450 monooxygenase penP, the latter being then converted to paxilline by the cytochrome P450 monooxygenase penQ. Paxilline is converted to beta-paxitriol via C-10 ketoreduction by the short-chain dehydrogenase PC-15 which can be monoprenylated at the C-20 by the indole diterpene prenyltransferase penD. A two-step elimination (acetylation and elimination) process performed by the O-acetyltransferase PC-16 and the P.simplicissimum ptmI-ortholog not yet identified in P.crustosum, leads to the production of the prenylated form of penijanthine. The FAD-linked oxidoreductase ptmO then converts the prenylated form of penijanthine into PC-M5 which is in turn transformed into PC-M4 by the aromatic dimethylallyltransferase PC-22. A series of oxidation steps involving 4 cytochrome P450 monooxygenases (PC-21, PC-05, PC-23, PC-20) and a FAD-dependent monooxygenase (PC-14) are required for the transformation of PC-M4 to penitrems A and E. Synthesis of these final products is proposed to proceed via penitrems D and C (PC-21, PC-05, PC-14) and penitrems B and F (PC-21, PC-05, PC-14, PC-23). In Penicillium crustosum (Blue mold fungus), this protein is Geranylgeranyl pyrophosphate synthase penG.